The primary structure comprises 398 residues: S-adenosylmethionine synthase (398 aa).

Residue H17 participates in ATP binding. D19 is a Mg(2+) binding site. E45 contributes to the K(+) binding site. E58 and Q101 together coordinate L-methionine. Positions 101–111 (QSPDIAQGVDK) are flexible loop. ATP contacts are provided by residues 176–178 (DGK), 243–244 (RF), D252, 258–259 (RK), and K279. An L-methionine-binding site is contributed by D252. K283 is an L-methionine binding site.

Belongs to the AdoMet synthase family. As to quaternary structure, homotetramer; dimer of dimers. Mg(2+) is required as a cofactor. It depends on K(+) as a cofactor.

Its subcellular location is the cytoplasm. It catalyses the reaction L-methionine + ATP + H2O = S-adenosyl-L-methionine + phosphate + diphosphate. The protein operates within amino-acid biosynthesis; S-adenosyl-L-methionine biosynthesis; S-adenosyl-L-methionine from L-methionine: step 1/1. Its function is as follows. Catalyzes the formation of S-adenosylmethionine (AdoMet) from methionine and ATP. The overall synthetic reaction is composed of two sequential steps, AdoMet formation and the subsequent tripolyphosphate hydrolysis which occurs prior to release of AdoMet from the enzyme. In Staphylococcus aureus (strain Mu3 / ATCC 700698), this protein is S-adenosylmethionine synthase.